The sequence spans 707 residues: MGQEKHVFTIDWAGRQLTVEAGQLAKQANGAVMVRYGDTAVLSTATASKEPKPLDFFPLTVNYEERLYAVGKIPGGFIKREGRPSEKAVLASRLIDRPIRPLFADGFRNEVQVISIVMSVDQDCSSEMAAMFGSSLALCVSDIPFEGPIAGVTVGRIDGKFVINPTVDQLEKSDINLIVAGTKDAINMVEAGADEVPEEIMLEAIMFGHEEIKRLIAFQEEIVAAVGKEKTEIELYEIDEELSEKVKSLAEPDLLSAIQVHEKHAREDAINEVKNAVVAKFEEEEHDEDTIKKVKQTLSKLVKNEVRRLITEEKVRPDGRGVDQIRPLSSEVGLLPRTHGSGLFTRGQTQALSVCTLGALGDVQILDGLGVEESKRFMHHYNFPQFSVGETGPMRGPGRREIGHGALGERALEPVIPNEKDFPYTVRLVSEVLESNGSTSQASICASTLAMMDAGVPIKAPVAGIAMGLVKSGEYYTVLTDIQGMEDALGDMDFKVAGTEKGVTALQMDIKIEGLSREILEEALQQAKKGRMEILNSMLSTLGESRKELSQYAPKILTMNINPDKIRDVIGPSGKQINKIIEDTGVKIDIEQDGTIFISSTDESSNQKAKKIIEDLVREVEVGQLYLGKVKRIEKFGAFVEIFSGKDGLVHISELALERVGKVEDVVKIGDEILVKVTEIDKQGRVNLSRKAVLREEKEKEQEQQQS.

Residues D487 and D493 each coordinate Mg(2+). The region spanning 554 to 613 (PKILTMNINPDKIRDVIGPSGKQINKIIEDTGVKIDIEQDGTIFISSTDESSNQKAKKII) is the KH domain. An S1 motif domain is found at 623-691 (GQLYLGKVKR…KQGRVNLSRK (69 aa)).

This sequence belongs to the polyribonucleotide nucleotidyltransferase family. It depends on Mg(2+) as a cofactor.

Its subcellular location is the cytoplasm. The enzyme catalyses RNA(n+1) + phosphate = RNA(n) + a ribonucleoside 5'-diphosphate. In terms of biological role, involved in mRNA degradation. Catalyzes the phosphorolysis of single-stranded polyribonucleotides processively in the 3'- to 5'-direction. This is Polyribonucleotide nucleotidyltransferase from Bacillus velezensis (strain DSM 23117 / BGSC 10A6 / LMG 26770 / FZB42) (Bacillus amyloliquefaciens subsp. plantarum).